The primary structure comprises 467 residues: MSKAKTLYEKIYDAHVVVAAPGETPILYIDRHLVHEVTSPQAFDGLREKGRPVRQVSKTFATMDHNVSTTTKDINASGEMARIQMQTLSKNCEEFGVTLYDINHKYQGIVHVMGPELGITLPGMTIVCGDSHTATHGAFGSLAFGIGTSEVEHVLATQTLKQGRAKTMKIEVRGKVAPGITAKDIVLAIIGKTTAAGGTGYVVEFCGEAIRDLSMEGRMTVCNMAIELGAKAGLIAPDATTFNYIKGRKFAPQGSDWDAAVDYWQTLKTDEDAQFDAVVTLEASEIKPQVTWGTNPGQVIAVDEPIPSPSQFADPVERSSAEKALAYMGLEAGKMLSDYKVDKVFVGSCTNSRIEDMRAAAAVAKGKKVASHVQALIVPGSEQVKAQAEAEGLDKIFIEAGFEWRLPGCSMCLAMNNDRLGPGERCASTSNRNFEGRQGRDGRTHLVSPAMAAAAAIAGHFVDIRQF.

Residues cysteine 349, cysteine 409, and cysteine 412 each coordinate [4Fe-4S] cluster.

This sequence belongs to the aconitase/IPM isomerase family. LeuC type 1 subfamily. Heterodimer of LeuC and LeuD. [4Fe-4S] cluster is required as a cofactor.

It catalyses the reaction (2R,3S)-3-isopropylmalate = (2S)-2-isopropylmalate. It functions in the pathway amino-acid biosynthesis; L-leucine biosynthesis; L-leucine from 3-methyl-2-oxobutanoate: step 2/4. In terms of biological role, catalyzes the isomerization between 2-isopropylmalate and 3-isopropylmalate, via the formation of 2-isopropylmaleate. The protein is 3-isopropylmalate dehydratase large subunit of Vibrio cholerae serotype O1 (strain ATCC 39541 / Classical Ogawa 395 / O395).